The following is a 299-amino-acid chain: Bifunctional protein FolD (299 aa).

Residues 166–168 (GRS), serine 191, and isoleucine 232 each bind NADP(+).

This sequence belongs to the tetrahydrofolate dehydrogenase/cyclohydrolase family. In terms of assembly, homodimer.

The catalysed reaction is (6R)-5,10-methylene-5,6,7,8-tetrahydrofolate + NADP(+) = (6R)-5,10-methenyltetrahydrofolate + NADPH. It catalyses the reaction (6R)-5,10-methenyltetrahydrofolate + H2O = (6R)-10-formyltetrahydrofolate + H(+). It participates in one-carbon metabolism; tetrahydrofolate interconversion. Its function is as follows. Catalyzes the oxidation of 5,10-methylenetetrahydrofolate to 5,10-methenyltetrahydrofolate and then the hydrolysis of 5,10-methenyltetrahydrofolate to 10-formyltetrahydrofolate. The polypeptide is Bifunctional protein FolD (Anaplasma marginale (strain St. Maries)).